A 631-amino-acid polypeptide reads, in one-letter code: Fusexin 1 (631 aa).

Residues Met1–Ala19 form the signal peptide. Positions Thr20–Ser90 are domain I N-terminus. The Extracellular segment spans residues Thr20–Asp537. The tract at residues Thr91 to Asn170 is domain II N-terminus. The Ca(2+) site is built by Asp112, Ser146, Tyr149, and Asp150. Cys125 and Cys155 are joined by a disulfide. The interval Ser143–Val148 is fusion loop, required for fusogenic activity, not required for membrane surface localization. Residues Pro171–Pro224 form a domain I central section region. The domain II C-terminus stretch occupies residues Glu225 to Phe316. The interval Val317 to Gly348 is domain I C-terminus. A domain III region spans residues Asp349–Ser455. Intrachain disulfides connect Cys389–Cys432, Cys457–Cys477, and Cys490–Cys506. The segment at Asp443 to Asn467 is disordered. The domain IV, required for fusogenic activity stretch occupies residues Glu456–Gln509. The stem stretch occupies residues Asp510–Asp537. Residues Leu538–Gly558 form a helical membrane-spanning segment. Residues Tyr559–Pro590 are Cytoplasmic-facing. A helical transmembrane segment spans residues Val591–Phe611. His612 is a topological domain (extracellular). The helical transmembrane segment at Pro613–Phe630 threads the bilayer. Arg631 is a topological domain (cytoplasmic).

This sequence belongs to the HAP2/GCS1 family. Fusexin 1 subfamily. Monomer in solution, crystallizes as a trimer in high salt (2.5 M NaCl, 0.2 M CaCl(2)). The trimer is stabilized by interdomain contacts and numerous Ca(2+) and Na(+) ions.

It is found in the cell surface. It localises to the cell membrane. In terms of biological role, exhibits fusogenic activity. Mediates cell-cell fusion in mammalian cells when present in both cells (bilateral fusion). The polypeptide is Fusexin 1 (Uncultured archaeon).